We begin with the raw amino-acid sequence, 201 residues long: UPF0376 protein F10G2.1 (201 aa).

At 1–3 (MKH) the chain is on the cytoplasmic side. A helical; Signal-anchor for type II membrane protein transmembrane segment spans residues 4–24 (FLLLAIIGILFLGSTYGASVA). At 25 to 201 (TEKLKASNCT…LLECDFRNIQ (177 aa)) the chain is on the extracellular side. N-linked (GlcNAc...) asparagine glycans are attached at residues Asn32 and Asn124.

This sequence belongs to the UPF0376 family.

The protein localises to the membrane. The polypeptide is UPF0376 protein F10G2.1 (Caenorhabditis elegans).